The primary structure comprises 443 residues: Glutamate--tRNA ligase 1 (443 aa).

The 'HIGH' region signature appears at 7 to 17 (PSPTGYLHVGN). Residues 236–240 (KISKR) carry the 'KMSKS' region motif. Residue lysine 239 coordinates ATP.

Belongs to the class-I aminoacyl-tRNA synthetase family. Glutamate--tRNA ligase type 1 subfamily. In terms of assembly, monomer.

Its subcellular location is the cytoplasm. It catalyses the reaction tRNA(Glu) + L-glutamate + ATP = L-glutamyl-tRNA(Glu) + AMP + diphosphate. Its function is as follows. Catalyzes the attachment of glutamate to tRNA(Glu) in a two-step reaction: glutamate is first activated by ATP to form Glu-AMP and then transferred to the acceptor end of tRNA(Glu). In Ehrlichia chaffeensis (strain ATCC CRL-10679 / Arkansas), this protein is Glutamate--tRNA ligase 1.